Here is a 402-residue protein sequence, read N- to C-terminus: 4-hydroxy-3-methylbut-2-enyl diphosphate reductase (402 aa).

Cys-66 contacts [4Fe-4S] cluster. His-96 serves as a coordination point for (2E)-4-hydroxy-3-methylbut-2-enyl diphosphate. His-96 lines the dimethylallyl diphosphate pocket. His-96 serves as a coordination point for isopentenyl diphosphate. Position 157 (Cys-157) interacts with [4Fe-4S] cluster. His-185 provides a ligand contact to (2E)-4-hydroxy-3-methylbut-2-enyl diphosphate. His-185 serves as a coordination point for dimethylallyl diphosphate. His-185 contacts isopentenyl diphosphate. The active-site Proton donor is Glu-187. Thr-250 lines the (2E)-4-hydroxy-3-methylbut-2-enyl diphosphate pocket. Cys-288 lines the [4Fe-4S] cluster pocket. (2E)-4-hydroxy-3-methylbut-2-enyl diphosphate-binding residues include Ser-317, Ser-318, Asn-319, and Ser-379. Ser-317, Ser-318, Asn-319, and Ser-379 together coordinate dimethylallyl diphosphate. 4 residues coordinate isopentenyl diphosphate: Ser-317, Ser-318, Asn-319, and Ser-379.

This sequence belongs to the IspH family. Requires [4Fe-4S] cluster as cofactor.

The catalysed reaction is isopentenyl diphosphate + 2 oxidized [2Fe-2S]-[ferredoxin] + H2O = (2E)-4-hydroxy-3-methylbut-2-enyl diphosphate + 2 reduced [2Fe-2S]-[ferredoxin] + 2 H(+). It carries out the reaction dimethylallyl diphosphate + 2 oxidized [2Fe-2S]-[ferredoxin] + H2O = (2E)-4-hydroxy-3-methylbut-2-enyl diphosphate + 2 reduced [2Fe-2S]-[ferredoxin] + 2 H(+). It functions in the pathway isoprenoid biosynthesis; dimethylallyl diphosphate biosynthesis; dimethylallyl diphosphate from (2E)-4-hydroxy-3-methylbutenyl diphosphate: step 1/1. The protein operates within isoprenoid biosynthesis; isopentenyl diphosphate biosynthesis via DXP pathway; isopentenyl diphosphate from 1-deoxy-D-xylulose 5-phosphate: step 6/6. In terms of biological role, catalyzes the conversion of 1-hydroxy-2-methyl-2-(E)-butenyl 4-diphosphate (HMBPP) into a mixture of isopentenyl diphosphate (IPP) and dimethylallyl diphosphate (DMAPP). Acts in the terminal step of the DOXP/MEP pathway for isoprenoid precursor biosynthesis. In Trichormus variabilis (strain ATCC 29413 / PCC 7937) (Anabaena variabilis), this protein is 4-hydroxy-3-methylbut-2-enyl diphosphate reductase.